Reading from the N-terminus, the 441-residue chain is Histidinol dehydrogenase (441 aa).

Tyrosine 136, glutamine 197, and asparagine 220 together coordinate NAD(+). The substrate site is built by serine 243, glutamine 265, and histidine 268. Zn(2+)-binding residues include glutamine 265 and histidine 268. Active-site proton acceptor residues include glutamate 333 and histidine 334. Histidine 334, aspartate 367, glutamate 421, and histidine 426 together coordinate substrate. Aspartate 367 lines the Zn(2+) pocket. Position 426 (histidine 426) interacts with Zn(2+).

It belongs to the histidinol dehydrogenase family. Zn(2+) is required as a cofactor.

It carries out the reaction L-histidinol + 2 NAD(+) + H2O = L-histidine + 2 NADH + 3 H(+). Its pathway is amino-acid biosynthesis; L-histidine biosynthesis; L-histidine from 5-phospho-alpha-D-ribose 1-diphosphate: step 9/9. In terms of biological role, catalyzes the sequential NAD-dependent oxidations of L-histidinol to L-histidinaldehyde and then to L-histidine. The sequence is that of Histidinol dehydrogenase from Pseudomonas putida (strain ATCC 47054 / DSM 6125 / CFBP 8728 / NCIMB 11950 / KT2440).